The sequence spans 331 residues: Glycerol-3-phosphate dehydrogenase [NAD(P)+] (331 aa).

Trp11, Arg30, and Lys105 together coordinate NADPH. The sn-glycerol 3-phosphate site is built by Lys105, Gly134, and Ser136. Residue Ala138 participates in NADPH binding. Lys189, Asp242, Ser252, Arg253, and Asn254 together coordinate sn-glycerol 3-phosphate. Lys189 (proton acceptor) is an active-site residue. Arg253 contributes to the NADPH binding site. Val277 and Glu279 together coordinate NADPH.

This sequence belongs to the NAD-dependent glycerol-3-phosphate dehydrogenase family.

Its subcellular location is the cytoplasm. It carries out the reaction sn-glycerol 3-phosphate + NAD(+) = dihydroxyacetone phosphate + NADH + H(+). The catalysed reaction is sn-glycerol 3-phosphate + NADP(+) = dihydroxyacetone phosphate + NADPH + H(+). It participates in membrane lipid metabolism; glycerophospholipid metabolism. In terms of biological role, catalyzes the reduction of the glycolytic intermediate dihydroxyacetone phosphate (DHAP) to sn-glycerol 3-phosphate (G3P), the key precursor for phospholipid synthesis. This chain is Glycerol-3-phosphate dehydrogenase [NAD(P)+], found in Janthinobacterium sp. (strain Marseille) (Minibacterium massiliensis).